Reading from the N-terminus, the 619-residue chain is 4-hydroxyphenylalkanoate adenylyltransferase (619 aa).

It belongs to the ATP-dependent AMP-binding enzyme family.

The enzyme catalyses 17-(4-hydroxyphenyl)heptadecanoate + holo-[(phenol)carboxyphthiodiolenone synthase] + ATP = 17-(4-hydroxyphenyl)heptadecanoyl-[(phenol)carboxyphthiodiolenone synthase] + AMP + diphosphate. It catalyses the reaction 19-(4-hydroxyphenyl)nonadecanoate + holo-[(phenol)carboxyphthiodiolenone synthase] + ATP = 19-(4-hydroxyphenyl)nonadecanoyl-[(phenol)carboxyphthiodiolenone synthase] + AMP + diphosphate. The catalysed reaction is dodecanoate + ATP + H(+) = dodecanoyl-AMP + diphosphate. The protein operates within lipid metabolism; fatty acid biosynthesis. In terms of biological role, catalyzes the activation of long-chain fatty acids as acyl-adenylates (acyl-AMP), which are then transferred to the multifunctional polyketide synthase PpsA for further chain extension. Involved in the biosynthesis of phenolphthiocerol, which is an important intermediate in the biosynthesis of phenolic glycolipid (PGL), also called mycosid B. The chain is 4-hydroxyphenylalkanoate adenylyltransferase (fadD29) from Mycobacterium tuberculosis (strain ATCC 25618 / H37Rv).